The chain runs to 88 residues: Small ribosomal subunit protein bS20 (88 aa).

This sequence belongs to the bacterial ribosomal protein bS20 family.

Binds directly to 16S ribosomal RNA. In Blochmanniella floridana, this protein is Small ribosomal subunit protein bS20.